The sequence spans 275 residues: Large ribosomal subunit protein uL2 (275 aa).

The interval 223-275 (VAMNPVDHPHGGGEGRTSGGRHPVSPWGQPTKGYKTRSNKRTDKYIVRRRNKK) is disordered.

Belongs to the universal ribosomal protein uL2 family. In terms of assembly, part of the 50S ribosomal subunit. Forms a bridge to the 30S subunit in the 70S ribosome.

Its function is as follows. One of the primary rRNA binding proteins. Required for association of the 30S and 50S subunits to form the 70S ribosome, for tRNA binding and peptide bond formation. It has been suggested to have peptidyltransferase activity; this is somewhat controversial. Makes several contacts with the 16S rRNA in the 70S ribosome. This is Large ribosomal subunit protein uL2 from Shewanella piezotolerans (strain WP3 / JCM 13877).